The following is a 37-amino-acid chain: Potassium channel toxin alpha-KTx 3.13 (37 aa).

3 disulfide bridges follow: C7–C27, C13–C32, and C17–C34. A Lysine amide modification is found at K37.

It belongs to the short scorpion toxin superfamily. Potassium channel inhibitor family. Alpha-KTx 03 subfamily. Expressed by the venom gland.

It localises to the secreted. In terms of biological role, blocks voltage-gated potassium channels Kv1.1/KCNA1 (IC(50)=203.15 pM), Kv1.2/KCNA2 (IC(50)=8.92 nM) from rat and human Kv1.3 KCNA3/KCNA3 (IC(50)=171 pM) potently. At 2 uM, also blocks Shaker IR and has a moderate effect on rat Kv1.6/KCNA6. The chain is Potassium channel toxin alpha-KTx 3.13 from Mesobuthus eupeus (Lesser Asian scorpion).